Consider the following 279-residue polypeptide: Very long chain fatty acid elongase 1 (279 aa).

An N-acetylmethionine modification is found at Met-1. The next 7 helical transmembrane spans lie at 23–43 (PLMG…YFIL), 61–81 (FMIV…YEFL), 110–130 (VAWL…IFIL), 137–154 (VTFL…SWWW), 176–196 (VVMY…PYLW), 203–223 (AIQL…YFMP), and 231–251 (IIIH…SNFW). The short motif at 275 to 279 (KVKAN) is the Di-lysine motif element.

It belongs to the ELO family. ELOVL1 subfamily. As to quaternary structure, interacts with LASS2, TECR and HSD17B12. Interacts with TECR. In terms of tissue distribution, expressed in a broad variety of tissues. Highly expressed in stomach, lung, kidney, skin and intestine. Moderately expressed in white adipose tissue, liver, spleen, brain, brown adipose tissue, heart and muscle. Weakly expressed in testis.

It is found in the endoplasmic reticulum membrane. The catalysed reaction is a very-long-chain acyl-CoA + malonyl-CoA + H(+) = a very-long-chain 3-oxoacyl-CoA + CO2 + CoA. It catalyses the reaction eicosanoyl-CoA + malonyl-CoA + H(+) = 3-oxodocosanoyl-CoA + CO2 + CoA. It carries out the reaction docosanoyl-CoA + malonyl-CoA + H(+) = 3-oxotetracosanoyl-CoA + CO2 + CoA. The enzyme catalyses tetracosanoyl-CoA + malonyl-CoA + H(+) = 3-oxohexacosanoyl-CoA + CO2 + CoA. The catalysed reaction is (11Z)-eicosenoyl-CoA + malonyl-CoA + H(+) = 3-oxo-(13Z)-docosenoyl-CoA + CO2 + CoA. It catalyses the reaction (13Z)-docosenoyl-CoA + malonyl-CoA + H(+) = 3-oxo-(15Z)-tetracosenoyl-CoA + CO2 + CoA. It functions in the pathway lipid metabolism; fatty acid biosynthesis. In terms of biological role, catalyzes the first and rate-limiting reaction of the four reactions that constitute the long-chain fatty acids elongation cycle. This endoplasmic reticulum-bound enzymatic process allows the addition of 2 carbons to the chain of long- and very long-chain fatty acids (VLCFAs) per cycle. Condensing enzyme that exhibits activity toward saturated and monounsaturated acyl-CoA substrates, with the highest activity towards C22:0 acyl-CoA. May participate in the production of both saturated and monounsaturated VLCFAs of different chain lengths that are involved in multiple biological processes as precursors of membrane lipids and lipid mediators. Important for saturated C24:0 and monounsaturated C24:1 sphingolipid synthesis. Indirectly inhibits RPE65 via production of VLCFAs. This Mus musculus (Mouse) protein is Very long chain fatty acid elongase 1.